Reading from the N-terminus, the 366-residue chain is Cobalt-precorrin-5B C(1)-methyltransferase (366 aa).

It belongs to the CbiD family.

The catalysed reaction is Co-precorrin-5B + S-adenosyl-L-methionine = Co-precorrin-6A + S-adenosyl-L-homocysteine. The protein operates within cofactor biosynthesis; adenosylcobalamin biosynthesis; cob(II)yrinate a,c-diamide from sirohydrochlorin (anaerobic route): step 6/10. Catalyzes the methylation of C-1 in cobalt-precorrin-5B to form cobalt-precorrin-6A. The sequence is that of Cobalt-precorrin-5B C(1)-methyltransferase from Pseudomonas aeruginosa (strain UCBPP-PA14).